The following is a 680-amino-acid chain: Fermitin family homolog 2 (680 aa).

An interaction with membranes containing phosphatidylinositol phosphate region spans residues 40 to 81 (HIGGVMLKLVEKLDVKKDWSDHALWWEKKRTWLLKTHWTLDK). The tract at residues 141–165 (LKKPRDPTKKKKKKLDDQSEDEALE) is disordered. A phosphoserine mark is found at serine 159, serine 181, serine 339, and serine 351. Residues 189–661 (MTPTYDAHDG…GYIFLSTRAK (473 aa)) form the FERM domain. Residues 380-476 (KVFKPKKLTL…WMAACRLASK (97 aa)) form the PH domain. Lysine 383 contacts a 1,2-diacyl-sn-glycero-3-phospho-(1D-myo-inositol-3,4,5-trisphosphate). The residue at position 666 (serine 666) is a Phosphoserine.

Belongs to the kindlin family. In terms of assembly, interacts with ILK. Interacts with FBLIM1. Interacts with ITGB1 and ITGB3. Interacts with active, unphosphorylated CTNNB1. Identified in a complex with CTNNB1 and TCF7L2/TCF4. Interacts with ITGB1; the interaction is inhibited in presence of ITGB1BP1. Ubiquitous. Found in numerous tumor tissues.

It is found in the cytoplasm. Its subcellular location is the cell cortex. It localises to the cytoskeleton. The protein resides in the stress fiber. The protein localises to the cell junction. It is found in the focal adhesion. Its subcellular location is the membrane. It localises to the cell projection. The protein resides in the lamellipodium membrane. The protein localises to the nucleus. It is found in the myofibril. Its subcellular location is the sarcomere. It localises to the i band. The protein resides in the cell surface. Functionally, scaffolding protein that enhances integrin activation mediated by TLN1 and/or TLN2, but activates integrins only weakly by itself. Binds to membranes enriched in phosphoinositides. Enhances integrin-mediated cell adhesion onto the extracellular matrix and cell spreading; this requires both its ability to interact with integrins and with phospholipid membranes. Required for the assembly of focal adhesions. Participates in the connection between extracellular matrix adhesion sites and the actin cytoskeleton and also in the orchestration of actin assembly and cell shape modulation. Recruits FBLIM1 to focal adhesions. Plays a role in the TGFB1 and integrin signaling pathways. Stabilizes active CTNNB1 and plays a role in the regulation of transcription mediated by CTNNB1 and TCF7L2/TCF4 and in Wnt signaling. This chain is Fermitin family homolog 2 (FERMT2), found in Homo sapiens (Human).